The following is a 345-amino-acid chain: Heat-inducible transcription repressor HrcA (345 aa).

It belongs to the HrcA family.

Its function is as follows. Negative regulator of class I heat shock genes (grpE-dnaK-dnaJ and groELS operons). Prevents heat-shock induction of these operons. This is Heat-inducible transcription repressor HrcA from Desulfitobacterium hafniense (strain DSM 10664 / DCB-2).